A 433-amino-acid chain; its full sequence is Myricetin 3-O-glucosyl 1,2-rhamnoside 6'-O-caffeoyltransferase AT1 (433 aa).

Residues His-157 and Asp-375 each act as proton acceptor in the active site.

This sequence belongs to the plant acyltransferase family. As to expression, expressed in young cromes.

The catalysed reaction is myricetin 3-O-[beta-D-glucosyl-(1-&gt;2)-alpha-L-rhamnoside] + (E)-caffeoyl-CoA = myricetin 3-O-[(6-O-(E)-caffeoyl-beta-D-glucosyl)-(1-&gt;2)-alpha-L-rhamnoside] + CoA. The protein operates within flavonoid metabolism. Caffeoyltransferase involved in montbretin A (MbA) biosynthesis. Catalyzes the caffeoylation of myricetin 3-O-beta-D-glucosyl 1,2-alpha-L-rhamnoside (MRG) to produce myricetin 3-O-(6'-O-caffeoyl)-beta-D-glucosyl 1,2-alpha-L-rhamnoside (mini-MbA), a precursor of MbA. Mini-MbA and MbA are potent inhibitors of human pancreatic alpha-amylase and are being developed as drug candidates to treat type-2 diabetes. In vitro, is able to catalyze the caffeoylation of quercetin 3-O-sophoroside (QGG), although QGG may not be a physiological substrate in vivo. In vitro, can use coumaryl-CoA, feruloyl-CoA and acetyl-CoA, although these three acyl donors may not be physiological in vivo. This Crocosmia x crocosmiiflora (Montbretia) protein is Myricetin 3-O-glucosyl 1,2-rhamnoside 6'-O-caffeoyltransferase AT1.